The chain runs to 163 residues: Protein-export protein SecB (163 aa).

It belongs to the SecB family. As to quaternary structure, homotetramer, a dimer of dimers. One homotetramer interacts with 1 SecA dimer.

It is found in the cytoplasm. One of the proteins required for the normal export of preproteins out of the cell cytoplasm. It is a molecular chaperone that binds to a subset of precursor proteins, maintaining them in a translocation-competent state. It also specifically binds to its receptor SecA. This Pseudomonas aeruginosa (strain LESB58) protein is Protein-export protein SecB.